Reading from the N-terminus, the 143-residue chain is Large ribosomal subunit protein uL11 (143 aa).

The protein belongs to the universal ribosomal protein uL11 family. Part of the ribosomal stalk of the 50S ribosomal subunit. Interacts with L10 and the large rRNA to form the base of the stalk. L10 forms an elongated spine to which L12 dimers bind in a sequential fashion forming a multimeric L10(L12)X complex. Post-translationally, one or more lysine residues are methylated.

Its function is as follows. Forms part of the ribosomal stalk which helps the ribosome interact with GTP-bound translation factors. The protein is Large ribosomal subunit protein uL11 of Pseudomonas fluorescens (strain Pf0-1).